The following is a 247-amino-acid chain: Cell division protein ZapD (247 aa).

The protein belongs to the ZapD family. As to quaternary structure, interacts with FtsZ.

The protein localises to the cytoplasm. Cell division factor that enhances FtsZ-ring assembly. Directly interacts with FtsZ and promotes bundling of FtsZ protofilaments, with a reduction in FtsZ GTPase activity. The polypeptide is Cell division protein ZapD (Escherichia coli O157:H7).